A 184-amino-acid polypeptide reads, in one-letter code: Class II hydrophobin 6 (184 aa).

Positions 1–16 (MNFMLLSAALASMAVA) are cleaved as a signal peptide. 4 cysteine pairs are disulfide-bonded: Cys-122/Cys-169, Cys-130/Cys-160, Cys-131/Cys-143, and Cys-170/Cys-181.

This sequence belongs to the cerato-ulmin hydrophobin family. Homotetramer. Further self-assembles to form highly ordered films at water-air interfaces through intermolecular interactions. In terms of tissue distribution, expressed in the mycellium.

It is found in the secreted. Aerial growth, conidiation, and dispersal of filamentous fungi in the environment rely upon a capability of their secreting small amphipathic proteins called hydrophobins (HPBs) with low sequence identity. Class I can self-assemble into an outermost layer of rodlet bundles on aerial cell surfaces, conferring cellular hydrophobicity that supports fungal growth, development and dispersal; whereas Class II form highly ordered films at water-air interfaces through intermolecular interactions but contribute nothing to the rodlet structure. Hcf-6 is a class II hydrophobin that is involved in adhesion and in tomato plants infection. Is secreted to form a coat both around and beneath the fungus. The sequence is that of Class II hydrophobin 6 from Passalora fulva (Tomato leaf mold).